Consider the following 192-residue polypeptide: Interferon (192 aa).

The first 30 residues, 1 to 30, serve as a signal peptide directing secretion; it reads MAVPASPQHPRGYGILLLTLLMKALAAAAA. Cystine bridges form between Cys31–Cys128, Cys60–Cys154, and Cys67–Cys167. N-linked (GlcNAc...) asparagine glycosylation is found at Asn70 and Asn77.

It belongs to the alpha/beta interferon family.

The protein resides in the secreted. Functionally, has antiviral activities. The chain is Interferon from Meleagris gallopavo (Wild turkey).